A 99-amino-acid polypeptide reads, in one-letter code: Large ribosomal subunit protein uL23 (99 aa).

It belongs to the universal ribosomal protein uL23 family. Part of the 50S ribosomal subunit. Contacts protein L29, and trigger factor when it is bound to the ribosome.

Functionally, one of the early assembly proteins it binds 23S rRNA. One of the proteins that surrounds the polypeptide exit tunnel on the outside of the ribosome. Forms the main docking site for trigger factor binding to the ribosome. This Saccharopolyspora erythraea (strain ATCC 11635 / DSM 40517 / JCM 4748 / NBRC 13426 / NCIMB 8594 / NRRL 2338) protein is Large ribosomal subunit protein uL23.